Consider the following 378-residue polypeptide: L-lactate dehydrogenase (378 aa).

The FMN hydroxy acid dehydrogenase domain occupies 1–378 (MIISASTDYR…ELSRDSLVKR (378 aa)). A substrate-binding site is contributed by tyrosine 24. Serine 106 and glutamine 127 together coordinate FMN. Tyrosine 129 contributes to the substrate binding site. Residue threonine 155 participates in FMN binding. Residue arginine 164 coordinates substrate. Lysine 251 contacts FMN. Catalysis depends on histidine 275, which acts as the Proton acceptor. Arginine 278 provides a ligand contact to substrate. FMN is bound at residue 306–330 (DSGIRTGLDVVRMLALGADCTMLGR).

Belongs to the FMN-dependent alpha-hydroxy acid dehydrogenase family. FMN serves as cofactor.

It localises to the cell inner membrane. It catalyses the reaction (S)-lactate + A = pyruvate + AH2. Catalyzes the conversion of L-lactate to pyruvate. Is coupled to the respiratory chain. The polypeptide is L-lactate dehydrogenase (Vibrio cholerae serotype O1 (strain ATCC 39315 / El Tor Inaba N16961)).